The primary structure comprises 452 residues: Ribosome biogenesis protein YTM1 (452 aa).

Residues 17–98 (IVSQPVVFTT…EETLEIEYIE (82 aa)) form a ubiquitin-like (UBL) domain region. WD repeat units follow at residues 110–148 (PHED…TASI), 150–195 (AHPA…NPMA), and 208–247 (LHTA…TDEV). The interval 245-269 (DEVPEPALNERDRSKKRRRVEEGEV) is disordered. A compositionally biased stretch (basic and acidic residues) spans 252 to 269 (LNERDRSKKRRRVEEGEV). WD repeat units follow at residues 282–322 (SHTA…CSHT), 325–364 (ASEK…TILT), 371–411 (MHPS…SAMA), and 418–452 (GSGQ…EQKV).

Belongs to the WD repeat WDR12/YTM1 family. In terms of assembly, component of the NOP7 complex, composed of ERB1, NOP7 and YTM1. The complex is held together by ERB1, which interacts with NOP7 via its N-terminal domain and with YTM1 via a high-affinity interaction between the seven-bladed beta-propeller domains of the 2 proteins. The NOP7 complex associates with the 66S pre-ribosome. Interacts (via UBL domain) with MDN1 (via VWFA/MIDAS domain).

The protein localises to the nucleus. It localises to the nucleolus. The protein resides in the nucleoplasm. Functionally, component of the NOP7 complex, which is required for maturation of the 25S and 5.8S ribosomal RNAs and formation of the 60S ribosome. The polypeptide is Ribosome biogenesis protein YTM1 (Laccaria bicolor (strain S238N-H82 / ATCC MYA-4686) (Bicoloured deceiver)).